A 658-amino-acid chain; its full sequence is UvrABC system protein B (658 aa).

Positions 26-414 (AGLKKGLKHQ…PDVIEQIIRP (389 aa)) constitute a Helicase ATP-binding domain. ATP is bound at residue 39-46 (GATGTGKT). Residues 92 to 115 (YYDYYQPEAYVPQSDTYIEKDASI) carry the Beta-hairpin motif. The Helicase C-terminal domain occupies 430-592 (QIDDLMDEIN…ITPKTIKKEI (163 aa)). Positions 622–658 (DVFIEGMEHEMKEAAKALDFERAAELRDALLEIKAEG) constitute a UVR domain.

It belongs to the UvrB family. As to quaternary structure, forms a heterotetramer with UvrA during the search for lesions. Interacts with UvrC in an incision complex.

The protein localises to the cytoplasm. In terms of biological role, the UvrABC repair system catalyzes the recognition and processing of DNA lesions. A damage recognition complex composed of 2 UvrA and 2 UvrB subunits scans DNA for abnormalities. Upon binding of the UvrA(2)B(2) complex to a putative damaged site, the DNA wraps around one UvrB monomer. DNA wrap is dependent on ATP binding by UvrB and probably causes local melting of the DNA helix, facilitating insertion of UvrB beta-hairpin between the DNA strands. Then UvrB probes one DNA strand for the presence of a lesion. If a lesion is found the UvrA subunits dissociate and the UvrB-DNA preincision complex is formed. This complex is subsequently bound by UvrC and the second UvrB is released. If no lesion is found, the DNA wraps around the other UvrB subunit that will check the other stand for damage. This Listeria monocytogenes serovar 1/2a (strain ATCC BAA-679 / EGD-e) protein is UvrABC system protein B.